The primary structure comprises 504 residues: Hexokinase-10 (504 aa).

A helical transmembrane segment spans residues 7–29; it reads GWVRVAAVGWAVAACAVAAGMVA. One can recognise a Hexokinase domain in the interval 39 to 493; sequence NRAVAVVRDL…SGTGAALLAA (455 aa). Residues 94 to 226 are hexokinase small subdomain; sequence DGSEEGISYA…GLNMKVNVLV (133 aa). Residues Gly108 and Thr109 each coordinate ADP. D-glucose-binding residues include Thr192, Lys193, Asn227, Asn254, Glu282, and Glu313. Residues 227-482 form a hexokinase large subdomain region; that stretch reads NNTVGTLALG…ATVSLRVMEE (256 aa). Gly447 is an ADP binding site.

Belongs to the hexokinase family. In terms of tissue distribution, expressed specifically in stamen.

The protein localises to the plastid. Its subcellular location is the chloroplast outer membrane. The enzyme catalyses a D-hexose + ATP = a D-hexose 6-phosphate + ADP + H(+). It catalyses the reaction D-fructose + ATP = D-fructose 6-phosphate + ADP + H(+). It carries out the reaction D-glucose + ATP = D-glucose 6-phosphate + ADP + H(+). The protein operates within carbohydrate metabolism; hexose metabolism. Its pathway is carbohydrate degradation; glycolysis; D-glyceraldehyde 3-phosphate and glycerone phosphate from D-glucose: step 1/4. Its function is as follows. Fructose and glucose phosphorylating enzyme. The polypeptide is Hexokinase-10 (HXK10) (Oryza sativa subsp. japonica (Rice)).